Reading from the N-terminus, the 262-residue chain is Acyl-[acyl-carrier-protein]--UDP-N-acetylglucosamine O-acyltransferase (262 aa).

Belongs to the transferase hexapeptide repeat family. LpxA subfamily. In terms of assembly, homotrimer.

The protein resides in the cytoplasm. The enzyme catalyses a (3R)-hydroxyacyl-[ACP] + UDP-N-acetyl-alpha-D-glucosamine = a UDP-3-O-[(3R)-3-hydroxyacyl]-N-acetyl-alpha-D-glucosamine + holo-[ACP]. It participates in glycolipid biosynthesis; lipid IV(A) biosynthesis; lipid IV(A) from (3R)-3-hydroxytetradecanoyl-[acyl-carrier-protein] and UDP-N-acetyl-alpha-D-glucosamine: step 1/6. Functionally, involved in the biosynthesis of lipid A, a phosphorylated glycolipid that anchors the lipopolysaccharide to the outer membrane of the cell. In Mannheimia succiniciproducens (strain KCTC 0769BP / MBEL55E), this protein is Acyl-[acyl-carrier-protein]--UDP-N-acetylglucosamine O-acyltransferase.